The following is a 243-amino-acid chain: Cell surface glycoprotein CD200 receptor 1-B (243 aa).

Over 1 to 29 (MEISQQAGWCKKPASPMNTRAALEAVRNT) the chain is Cytoplasmic. Residues 30 to 47 (AWTIVLLTSAAVMGASGI) form a helical; Signal-anchor for type II membrane protein membrane-spanning segment. The Ig-like V-type domain maps to 47 to 146 (ISRVSANLGH…GNFHYLYHLT (100 aa)). The Lumenal segment spans residues 48–243 (SRVSANLGHS…LAQLPGGSAP (196 aa)). 2 disulfides stabilise this stretch: cysteine 62/cysteine 130 and cysteine 165/cysteine 214. Asparagine 64, asparagine 67, asparagine 127, asparagine 193, asparagine 222, and asparagine 228 each carry an N-linked (GlcNAc...) asparagine glycan. The region spanning 144-228 (HLTVLVAPRM…ATLNETRSIN (85 aa)) is the Ig-like C2-type domain.

The protein belongs to the CD200R family. In terms of tissue distribution, expressed in peripheral blood lymphocytes (PBL) and peripheral blood mononuclear cells (PBMC).

It localises to the membrane. This is Cell surface glycoprotein CD200 receptor 1-B (CD200R1B) from Gallus gallus (Chicken).